The primary structure comprises 481 residues: Probable Xaa-Pro aminopeptidase PEPP (481 aa).

The Mn(2+) site is built by aspartate 265, aspartate 276, glutamate 399, and glutamate 439.

Belongs to the peptidase M24B family. Mn(2+) is required as a cofactor.

The catalysed reaction is Release of any N-terminal amino acid, including proline, that is linked to proline, even from a dipeptide or tripeptide.. Catalyzes the removal of a penultimate prolyl residue from the N-termini of peptides. The protein is Probable Xaa-Pro aminopeptidase PEPP (PEPP) of Uncinocarpus reesii (strain UAMH 1704).